The sequence spans 762 residues: Cellulose synthase-like protein H2 (762 aa).

Positions 1 to 15 are enriched in low complexity; it reads MAVVAAAAATGSTTR. Residues 1–39 are disordered; it reads MAVVAAAAATGSTTRSGGGGGEGTRSGRKKPPPPPLQER. The next 2 helical transmembrane spans lie at 47–67 and 81–101; these read AWAWRLAGLAVLLLLLALLAL and GVWRVALVCEAWFAALCALNV. Residues aspartate 180 and aspartate 470 contribute to the active site. Helical transmembrane passes span 541 to 561, 582 to 602, 619 to 639, 673 to 693, 708 to 728, and 739 to 759; these read LAYLIVLGWPLRAPFELCYGL, FSVPLALFISYNTYNFMEYMA, IISVSAWTLAFLTVLLKSLGL, LPVFIPVTALAMLNIVAVTVG, APGIGEFMCCGWLVLCFFPFV, and GIPWSVKLKASLLVAMFVTFC.

It belongs to the glycosyltransferase 2 family. Plant cellulose synthase-like H subfamily.

Its subcellular location is the golgi apparatus membrane. Its function is as follows. Thought to be a Golgi-localized beta-glycan synthase that polymerize the backbones of noncellulosic polysaccharides (hemicelluloses) of plant cell wall. This chain is Cellulose synthase-like protein H2 (CSLH2), found in Oryza sativa subsp. japonica (Rice).